The sequence spans 463 residues: Bifunctional protein HldE (463 aa).

Residues 1-315 (MRKILVIGDL…LILNQTHPKI (315 aa)) form a ribokinase region. Residue 191 to 194 (NRFE) participates in ATP binding. Residue Asp260 is part of the active site. Residues 334 to 463 (FTNGCFDILH…IEKIKRAYND (130 aa)) form a cytidylyltransferase region.

This sequence in the N-terminal section; belongs to the carbohydrate kinase PfkB family. In the C-terminal section; belongs to the cytidylyltransferase family. Homodimer.

The catalysed reaction is D-glycero-beta-D-manno-heptose 7-phosphate + ATP = D-glycero-beta-D-manno-heptose 1,7-bisphosphate + ADP + H(+). It catalyses the reaction D-glycero-beta-D-manno-heptose 1-phosphate + ATP + H(+) = ADP-D-glycero-beta-D-manno-heptose + diphosphate. Its pathway is nucleotide-sugar biosynthesis; ADP-L-glycero-beta-D-manno-heptose biosynthesis; ADP-L-glycero-beta-D-manno-heptose from D-glycero-beta-D-manno-heptose 7-phosphate: step 1/4. It functions in the pathway nucleotide-sugar biosynthesis; ADP-L-glycero-beta-D-manno-heptose biosynthesis; ADP-L-glycero-beta-D-manno-heptose from D-glycero-beta-D-manno-heptose 7-phosphate: step 3/4. Functionally, catalyzes the phosphorylation of D-glycero-D-manno-heptose 7-phosphate at the C-1 position to selectively form D-glycero-beta-D-manno-heptose-1,7-bisphosphate. Its function is as follows. Catalyzes the ADP transfer from ATP to D-glycero-beta-D-manno-heptose 1-phosphate, yielding ADP-D-glycero-beta-D-manno-heptose. This is Bifunctional protein HldE from Helicobacter acinonychis (strain Sheeba).